The chain runs to 141 residues: MAKKVEKLVKLQIPAGKATPAPPVGPALGQAGINIMGFTKEFNARTADQAGMIIPVVITVYEDKSFDFITKTPPAAVLLKKAAGVEKGSGTPNKTKVATVTRAQVQEIAETKMPDLNAANLESAMRMIEGTARSMGFTITD.

Belongs to the universal ribosomal protein uL11 family. Part of the ribosomal stalk of the 50S ribosomal subunit. Interacts with L10 and the large rRNA to form the base of the stalk. L10 forms an elongated spine to which L12 dimers bind in a sequential fashion forming a multimeric L10(L12)X complex. Post-translationally, one or more lysine residues are methylated.

Its function is as follows. Forms part of the ribosomal stalk which helps the ribosome interact with GTP-bound translation factors. This Streptococcus uberis (strain ATCC BAA-854 / 0140J) protein is Large ribosomal subunit protein uL11.